The primary structure comprises 299 residues: 4-hydroxy-tetrahydrodipicolinate synthase (299 aa).

Thr50 provides a ligand contact to pyruvate. Residue Tyr139 is the Proton donor/acceptor of the active site. Residue Lys167 is the Schiff-base intermediate with substrate of the active site. Residue Val209 participates in pyruvate binding.

The protein belongs to the DapA family. As to quaternary structure, homotetramer; dimer of dimers.

The protein resides in the cytoplasm. It carries out the reaction L-aspartate 4-semialdehyde + pyruvate = (2S,4S)-4-hydroxy-2,3,4,5-tetrahydrodipicolinate + H2O + H(+). The protein operates within amino-acid biosynthesis; L-lysine biosynthesis via DAP pathway; (S)-tetrahydrodipicolinate from L-aspartate: step 3/4. Catalyzes the condensation of (S)-aspartate-beta-semialdehyde [(S)-ASA] and pyruvate to 4-hydroxy-tetrahydrodipicolinate (HTPA). The protein is 4-hydroxy-tetrahydrodipicolinate synthase of Synechococcus elongatus (strain ATCC 33912 / PCC 7942 / FACHB-805) (Anacystis nidulans R2).